The following is a 476-amino-acid chain: NADH-quinone oxidoreductase subunit N (476 aa).

A run of 13 helical transmembrane segments spans residues 7–27 (LTVEILTAALGLGLLALGLLV), 33–53 (RGIAYVATAGLAGILAAAFGM), 59–79 (VVLGGYVIDPFGTYFKILFLV), 100–120 (GEYYALLVLATLGMMVLASSG), 122–142 (LVSLYLGLELMTITFCILAAF), 156–176 (YVLLGAMSSAIFLYGLSLVYG), 199–219 (LLLGTIFILAGFAFKVTAVPF), 237–257 (FLSVASKAAAFAALVRVFFGA), 265–285 (WVQLFIALAVLTIVLGNLVAI), 305–325 (LLLGIVSFSVLGVGAVMYYAM), 363–383 (VAALMLFSLLSLAGIPPMAGF), 399–419 (IWLAILGILMSMVSVYYYLLV), and 437–457 (VAPGLQVAMVVSLLILFILGI).

The protein belongs to the complex I subunit 2 family. In terms of assembly, NDH-1 is composed of 14 different subunits. Subunits NuoA, H, J, K, L, M, N constitute the membrane sector of the complex.

The protein resides in the cell membrane. It carries out the reaction a quinone + NADH + 5 H(+)(in) = a quinol + NAD(+) + 4 H(+)(out). In terms of biological role, NDH-1 shuttles electrons from NADH, via FMN and iron-sulfur (Fe-S) centers, to quinones in the respiratory chain. The immediate electron acceptor for the enzyme in this species is believed to be a menaquinone. Couples the redox reaction to proton translocation (for every two electrons transferred, four hydrogen ions are translocated across the cytoplasmic membrane), and thus conserves the redox energy in a proton gradient. The chain is NADH-quinone oxidoreductase subunit N from Moorella thermoacetica (strain ATCC 39073 / JCM 9320).